Reading from the N-terminus, the 683-residue chain is UvrABC system protein B (683 aa).

Positions 31-414 (AGFEKGYKEQ…ELERTDHKVE (384 aa)) constitute a Helicase ATP-binding domain. 44–51 (GATGTGKT) provides a ligand contact to ATP. Residues 97-120 (YYDYYQPEAYVPQSDTYIEKDSAI) carry the Beta-hairpin motif. The Helicase C-terminal domain occupies 435–601 (QIDDLVGEIN…TIIKPVHDVI (167 aa)). One can recognise a UVR domain in the interval 632 to 667 (KTMIKNLQEQMKEAAKKLDFEEAANLRDAIMELQSS). The tract at residues 662–683 (MELQSSSRRPKTRKGKALNGKR) is disordered. A compositionally biased stretch (basic residues) spans 669-683 (RRPKTRKGKALNGKR).

Belongs to the UvrB family. Forms a heterotetramer with UvrA during the search for lesions. Interacts with UvrC in an incision complex.

It is found in the cytoplasm. In terms of biological role, the UvrABC repair system catalyzes the recognition and processing of DNA lesions. A damage recognition complex composed of 2 UvrA and 2 UvrB subunits scans DNA for abnormalities. Upon binding of the UvrA(2)B(2) complex to a putative damaged site, the DNA wraps around one UvrB monomer. DNA wrap is dependent on ATP binding by UvrB and probably causes local melting of the DNA helix, facilitating insertion of UvrB beta-hairpin between the DNA strands. Then UvrB probes one DNA strand for the presence of a lesion. If a lesion is found the UvrA subunits dissociate and the UvrB-DNA preincision complex is formed. This complex is subsequently bound by UvrC and the second UvrB is released. If no lesion is found, the DNA wraps around the other UvrB subunit that will check the other stand for damage. The sequence is that of UvrABC system protein B from Lactobacillus acidophilus (strain ATCC 700396 / NCK56 / N2 / NCFM).